The sequence spans 461 residues: GTPase Der (461 aa).

EngA-type G domains are found at residues 2-164 (QSII…NENF) and 197-369 (IKVG…ANFT). Residues 8–15 (GKPNVGKS), 55–59 (DSGGL), 116–119 (NKID), 203–210 (GRVNVGKS), 250–254 (DTAGI), and 314–317 (NKWD) contribute to the GTP site. Residues 370–454 (QKIPTAKLNA…PLIIVSRKKG (85 aa)) form the KH-like domain.

Belongs to the TRAFAC class TrmE-Era-EngA-EngB-Septin-like GTPase superfamily. EngA (Der) GTPase family. In terms of assembly, associates with the 50S ribosomal subunit.

Functionally, GTPase that plays an essential role in the late steps of ribosome biogenesis. In Campylobacter lari (strain RM2100 / D67 / ATCC BAA-1060), this protein is GTPase Der.